Reading from the N-terminus, the 94-residue chain is Small ribosomal subunit protein uS19 (94 aa).

It belongs to the universal ribosomal protein uS19 family.

Protein S19 forms a complex with S13 that binds strongly to the 16S ribosomal RNA. This is Small ribosomal subunit protein uS19 from Dictyoglomus thermophilum (strain ATCC 35947 / DSM 3960 / H-6-12).